A 325-amino-acid polypeptide reads, in one-letter code: tRNA N6-adenosine threonylcarbamoyltransferase (325 aa).

His-107, His-111, and Tyr-127 together coordinate Fe cation. Substrate contacts are provided by residues 127-131 (YVSGG), Asp-159, Gly-172, Glu-176, and Asn-257. Residue Asp-285 participates in Fe cation binding.

The protein belongs to the KAE1 / TsaD family. In terms of assembly, monomer. Component of the KEOPS complex that consists of Kae1, Bud32, Cgi121 and Pcc1; the whole complex dimerizes. Fe(2+) serves as cofactor.

The protein resides in the cytoplasm. It catalyses the reaction L-threonylcarbamoyladenylate + adenosine(37) in tRNA = N(6)-L-threonylcarbamoyladenosine(37) in tRNA + AMP + H(+). Functionally, required for the formation of a threonylcarbamoyl group on adenosine at position 37 (t(6)A37) in tRNAs that read codons beginning with adenine. Is a component of the KEOPS complex that is probably involved in the transfer of the threonylcarbamoyl moiety of threonylcarbamoyl-AMP (TC-AMP) to the N6 group of A37. Kae1 likely plays a direct catalytic role in this reaction, but requires other protein(s) of the complex to fulfill this activity. This Thermococcus kodakarensis (strain ATCC BAA-918 / JCM 12380 / KOD1) (Pyrococcus kodakaraensis (strain KOD1)) protein is tRNA N6-adenosine threonylcarbamoyltransferase.